The primary structure comprises 155 residues: Deoxyuridine 5'-triphosphate nucleotidohydrolase (155 aa).

Residues Arg74–Gly76, Asn87, and Leu91–Asp93 contribute to the substrate site.

The protein belongs to the dUTPase family. Requires Mg(2+) as cofactor.

It carries out the reaction dUTP + H2O = dUMP + diphosphate + H(+). It participates in pyrimidine metabolism; dUMP biosynthesis; dUMP from dCTP (dUTP route): step 2/2. Its function is as follows. This enzyme is involved in nucleotide metabolism: it produces dUMP, the immediate precursor of thymidine nucleotides and it decreases the intracellular concentration of dUTP so that uracil cannot be incorporated into DNA. This is Deoxyuridine 5'-triphosphate nucleotidohydrolase from Xylella fastidiosa (strain M23).